We begin with the raw amino-acid sequence, 209 residues long: Outer-membrane lipoprotein carrier protein (209 aa).

The N-terminal stretch at 1–22 (MKKLLLTLAMVPAVLFSPTAWG) is a signal peptide.

Belongs to the LolA family. As to quaternary structure, monomer.

It is found in the periplasm. Functionally, participates in the translocation of lipoproteins from the inner membrane to the outer membrane. Only forms a complex with a lipoprotein if the residue after the N-terminal Cys is not an aspartate (The Asp acts as a targeting signal to indicate that the lipoprotein should stay in the inner membrane). This Alcanivorax borkumensis (strain ATCC 700651 / DSM 11573 / NCIMB 13689 / SK2) protein is Outer-membrane lipoprotein carrier protein.